Consider the following 688-residue polypeptide: Translation initiation factor IF-2 (688 aa).

The segment at 62 to 103 is disordered; sequence EFEVEEKVVRSKKNSNKKKKKGKGNEDKRQDNFAGRQQTQIV. Basic residues predominate over residues 71–83; sequence RSKKNSNKKKKKG. Positions 190-359 constitute a tr-type G domain; that stretch reads ERPAVVTIMG…LLVSEVEEYK (170 aa). The G1 stretch occupies residues 199–206; it reads GHVDHGKT. Position 199 to 206 (199 to 206) interacts with GTP; it reads GHVDHGKT. Residues 224 to 228 are G2; sequence GITQH. Positions 245-248 are G3; that stretch reads DTPG. Residues 245–249 and 299–302 contribute to the GTP site; these read DTPGH and NKMD. The segment at 299–302 is G4; it reads NKMD. The segment at 335–337 is G5; sequence SAI.

This sequence belongs to the TRAFAC class translation factor GTPase superfamily. Classic translation factor GTPase family. IF-2 subfamily.

The protein resides in the cytoplasm. In terms of biological role, one of the essential components for the initiation of protein synthesis. Protects formylmethionyl-tRNA from spontaneous hydrolysis and promotes its binding to the 30S ribosomal subunits. Also involved in the hydrolysis of GTP during the formation of the 70S ribosomal complex. This Bacillus cereus (strain G9842) protein is Translation initiation factor IF-2.